A 305-amino-acid polypeptide reads, in one-letter code: NAD-dependent protein deacylase SIR4 (305 aa).

A mitochondrion-targeting transit peptide spans 1 to 10 (MSAQVMHNRV). The Deacetylase sirtuin-type domain occupies 11 to 305 (MGTVKDSASK…VLEELASTIR (295 aa)). Residues 37–57 (GAGVSTDSGIPDYRGPQGIYS) and 118–121 (QNVD) contribute to the NAD(+) site. Histidine 139 (proton acceptor) is an active-site residue. 4 residues coordinate Zn(2+): cysteine 147, cysteine 150, cysteine 209, and cysteine 212. NAD(+)-binding positions include 249 to 251 (GSS), 275 to 277 (NLG), and serine 293.

The protein belongs to the sirtuin family. Class II subfamily. The cofactor is Zn(2+).

It is found in the mitochondrion matrix. It catalyses the reaction N(6)-acetyl-L-lysyl-[protein] + NAD(+) + H2O = 2''-O-acetyl-ADP-D-ribose + nicotinamide + L-lysyl-[protein]. Its function is as follows. NAD-dependent protein deacylase. Catalyzes the NAD-dependent hydrolysis of acyl groups from lysine residues. The protein is NAD-dependent protein deacylase SIR4 of Batrachochytrium dendrobatidis (strain JAM81 / FGSC 10211) (Frog chytrid fungus).